Consider the following 263-residue polypeptide: Probable HTH-type transcriptional regulator ArcR (263 aa).

In terms of domain architecture, HTH iclR-type spans 14–74 (ITSVLNAVEI…DGDGTYQLGD (61 aa)). The H-T-H motif DNA-binding region spans 35-54 (LQELTTELDLTKATIHTYMA). The IclR-ED domain maps to 89–262 (LYRLGREEID…ANIIEVRLET (174 aa)).

In terms of biological role, probably regulates transcription of the arcABC operon. In Halobacterium salinarum (strain ATCC 29341 / DSM 671 / R1), this protein is Probable HTH-type transcriptional regulator ArcR (arcR).